We begin with the raw amino-acid sequence, 275 residues long: Ribosomal RNA small subunit methyltransferase A (275 aa).

The S-adenosyl-L-methionine site is built by asparagine 28, leucine 30, glycine 55, glutamate 77, aspartate 103, and asparagine 123.

Belongs to the class I-like SAM-binding methyltransferase superfamily. rRNA adenine N(6)-methyltransferase family. RsmA subfamily.

The protein resides in the cytoplasm. The enzyme catalyses adenosine(1518)/adenosine(1519) in 16S rRNA + 4 S-adenosyl-L-methionine = N(6)-dimethyladenosine(1518)/N(6)-dimethyladenosine(1519) in 16S rRNA + 4 S-adenosyl-L-homocysteine + 4 H(+). Specifically dimethylates two adjacent adenosines (A1518 and A1519) in the loop of a conserved hairpin near the 3'-end of 16S rRNA in the 30S particle. May play a critical role in biogenesis of 30S subunits. The chain is Ribosomal RNA small subunit methyltransferase A from Rhizobium etli (strain ATCC 51251 / DSM 11541 / JCM 21823 / NBRC 15573 / CFN 42).